The sequence spans 82 residues: Immediate early response 3-interacting protein 1 (82 aa).

2 consecutive transmembrane segments (helical) span residues 2–22 (AFTL…VAVL) and 62–82 (VMRV…LLFG).

Belongs to the YOS1 family.

It is found in the endoplasmic reticulum membrane. Regulator of endoplasmic reticulum secretion that acts as a key determinant of brain size. Required for secretion of extracellular matrix proteins. Required for correct brain development by depositing sufficient extracellular matrix proteins for tissue integrity and the proliferation of neural progenitors. Acts as a regulator of the unfolded protein response (UPR). This chain is Immediate early response 3-interacting protein 1, found in Xenopus laevis (African clawed frog).